A 501-amino-acid chain; its full sequence is Lysine--tRNA ligase (501 aa).

Mg(2+)-binding residues include Glu411 and Glu418.

This sequence belongs to the class-II aminoacyl-tRNA synthetase family. As to quaternary structure, homodimer. Requires Mg(2+) as cofactor.

It localises to the cytoplasm. It catalyses the reaction tRNA(Lys) + L-lysine + ATP = L-lysyl-tRNA(Lys) + AMP + diphosphate. The protein is Lysine--tRNA ligase of Clostridium perfringens (strain ATCC 13124 / DSM 756 / JCM 1290 / NCIMB 6125 / NCTC 8237 / Type A).